A 2475-amino-acid chain; its full sequence is Gellan lyase (2475 aa).

The first 35 residues, 1 to 35, serve as a signal peptide directing secretion; sequence MRFSWKKLVSAALVMALLVGIVYPAASGRGAVASA. The 86-residue stretch at 623–708 folds into the Fibronectin type-III domain; that stretch reads APANVQVAIS…QPATATSPGE (86 aa). The NodB homology domain maps to 1295 to 1518; the sequence is GAFSLTIDDN…RDQIWVGRYG (224 aa). The Cohesin domain occupies 2111-2223; sequence QPGQQLELTV…VSTAVSLSDF (113 aa).

In terms of processing, subject to proteolytic processing after secretion. Cleavage occurs between Gly-1205 and Leu-1206. This gives rise to a N-terminal gellan lyase of 130 kDa being the mature form of the gellan lyase. The function of C-terminal gellan lyase is not known.

It is found in the secreted. The catalysed reaction is Eliminative cleavage of beta-D-glucopyranosyl-(1-&gt;4)-beta-D-glucopyranosyluronate bonds of gellan backbone releasing tetrasaccharides containing a 4-deoxy-4,5-unsaturated D-glucopyranosyluronic acid at the non-reducing end. The tetrasaccharide produced from deacetylated gellan is beta-D-4-deoxy-Delta(4)-GlcAp-(1-&gt;4)-beta-D-Glcp-(1-&gt;4)-alpha-L-Rhap-(1-&gt;3)-beta-D-Glcp.. Functionally, cleaves the glycosidic bonds of gellan backbone and releases tetrasaccharide units of glucuronyl-glucosyl-rhamnosyl-glucose with unsaturated glucuronic acid at the non-reducing terminal. The enzyme is highly specific to the heteropolysaccharide gellan, especially deacetylated gellan. This is Gellan lyase from Bacillus sp.